Reading from the N-terminus, the 196-residue chain is ATP-dependent Clp protease proteolytic subunit (196 aa).

The active-site Nucleophile is S101. H126 is an active-site residue.

The protein belongs to the peptidase S14 family. In terms of assembly, component of the chloroplastic Clp protease core complex.

It is found in the plastid. It localises to the chloroplast stroma. It carries out the reaction Hydrolysis of proteins to small peptides in the presence of ATP and magnesium. alpha-casein is the usual test substrate. In the absence of ATP, only oligopeptides shorter than five residues are hydrolyzed (such as succinyl-Leu-Tyr-|-NHMec, and Leu-Tyr-Leu-|-Tyr-Trp, in which cleavage of the -Tyr-|-Leu- and -Tyr-|-Trp bonds also occurs).. In terms of biological role, cleaves peptides in various proteins in a process that requires ATP hydrolysis. Has a chymotrypsin-like activity. Plays a major role in the degradation of misfolded proteins. The polypeptide is ATP-dependent Clp protease proteolytic subunit (Lactuca sativa (Garden lettuce)).